Consider the following 155-residue polypeptide: Small ribosomal subunit protein bS6 (155 aa).

Residues 115–137 (EADAAKAEADAARVEAEAKKAET) are compositionally biased toward basic and acidic residues. The interval 115–155 (EADAAKAEADAARVEAEAKKAETDETDETVDAETPENEEEN) is disordered. Acidic residues predominate over residues 138 to 155 (DETDETVDAETPENEEEN).

It belongs to the bacterial ribosomal protein bS6 family.

Its function is as follows. Binds together with bS18 to 16S ribosomal RNA. The protein is Small ribosomal subunit protein bS6 of Desulforapulum autotrophicum (strain ATCC 43914 / DSM 3382 / VKM B-1955 / HRM2) (Desulfobacterium autotrophicum).